The chain runs to 406 residues: Succinylornithine transaminase (406 aa).

Lys252 carries the N6-(pyridoxal phosphate)lysine modification.

This sequence belongs to the class-III pyridoxal-phosphate-dependent aminotransferase family. AstC subfamily. Pyridoxal 5'-phosphate is required as a cofactor.

The catalysed reaction is N(2)-succinyl-L-ornithine + 2-oxoglutarate = N-succinyl-L-glutamate 5-semialdehyde + L-glutamate. Its pathway is amino-acid degradation; L-arginine degradation via AST pathway; L-glutamate and succinate from L-arginine: step 3/5. In terms of biological role, catalyzes the transamination of N(2)-succinylornithine and alpha-ketoglutarate into N(2)-succinylglutamate semialdehyde and glutamate. Can also act as an acetylornithine aminotransferase. This chain is Succinylornithine transaminase, found in Shigella boydii serotype 18 (strain CDC 3083-94 / BS512).